A 328-amino-acid polypeptide reads, in one-letter code: DNA-directed RNA polymerase subunit alpha (328 aa).

Residues 1 to 232 (MSTQGFLKPR…DQISVFAALE (232 aa)) form an alpha N-terminal domain (alpha-NTD) region. The segment at 248 to 328 (IDPVLLRPVD…NWPPLGLERP (81 aa)) is alpha C-terminal domain (alpha-CTD).

Belongs to the RNA polymerase alpha chain family. In terms of assembly, homodimer. The RNAP catalytic core consists of 2 alpha, 1 beta, 1 beta' and 1 omega subunit. When a sigma factor is associated with the core the holoenzyme is formed, which can initiate transcription.

The catalysed reaction is RNA(n) + a ribonucleoside 5'-triphosphate = RNA(n+1) + diphosphate. DNA-dependent RNA polymerase catalyzes the transcription of DNA into RNA using the four ribonucleoside triphosphates as substrates. The polypeptide is DNA-directed RNA polymerase subunit alpha (Bordetella avium (strain 197N)).